The chain runs to 96 residues: (4S)-4-hydroxy-5-phosphonooxypentane-2,3-dione isomerase (96 aa).

The 90-residue stretch at 2 to 91 (HVTLVEINVK…MTGPRKKTVF (90 aa)) folds into the ABM domain.

It belongs to the LsrG family. In terms of assembly, homodimer.

The protein resides in the cytoplasm. The enzyme catalyses (2S)-2-hydroxy-3,4-dioxopentyl phosphate = 3-hydroxy-2,4-dioxopentyl phosphate. Its function is as follows. Involved in the degradation of phospho-AI-2, thereby terminating induction of the lsr operon and closing the AI-2 signaling cycle. Catalyzes the conversion of (4S)-4-hydroxy-5-phosphonooxypentane-2,3-dione (P-DPD) to 3-hydroxy-5-phosphonooxypentane-2,4-dione (P-HPD). This is (4S)-4-hydroxy-5-phosphonooxypentane-2,3-dione isomerase from Yersinia pseudotuberculosis serotype O:1b (strain IP 31758).